Reading from the N-terminus, the 385-residue chain is NADH-quinone oxidoreductase subunit H (385 aa).

8 consecutive transmembrane segments (helical) span residues 14-34, 80-100, 130-150, 172-192, 219-239, 280-300, 325-345, and 365-385; these read GLKL…LVWL, FLYY…FSAI, IGVG…TLLM, ISYE…YGTF, LPNW…SAAF, MMIA…IPYV, LIHF…FIWV, and MLPW…IASL.

This sequence belongs to the complex I subunit 1 family. In terms of assembly, NDH-1 is composed of 14 different subunits. Subunits NuoA, H, J, K, L, M, N constitute the membrane sector of the complex.

It is found in the cell inner membrane. It carries out the reaction a quinone + NADH + 5 H(+)(in) = a quinol + NAD(+) + 4 H(+)(out). In terms of biological role, NDH-1 shuttles electrons from NADH, via FMN and iron-sulfur (Fe-S) centers, to quinones in the respiratory chain. The immediate electron acceptor for the enzyme in this species is believed to be ubiquinone. Couples the redox reaction to proton translocation (for every two electrons transferred, four hydrogen ions are translocated across the cytoplasmic membrane), and thus conserves the redox energy in a proton gradient. This subunit may bind ubiquinone. This is NADH-quinone oxidoreductase subunit H from Bdellovibrio bacteriovorus (strain ATCC 15356 / DSM 50701 / NCIMB 9529 / HD100).